Consider the following 289-residue polypeptide: MASSTFFSDWNQMLKPRVTSLVLATIIPGLYLASEQSPSGFLIAITLFGTFLMSSASFIFNQVIEKDRDAKMKRTSNRPIPSGRISVVQATLVGIAMMGSSFYVLAVYVNLLTALCAFAALISYVFLYTIFLKPRTTQNIVIGGVAGCVGPLIGYAAIGNSLPVQAWSLFMMIFLWTPAHFWALAIFLKEEYSDADFPMLPVVKGIHQTTKSIFFYTILYSIACVSFYFLESSMGFLYLIVSLIVCIWMGILSYQLIQNPEPQSARKFFFFSILHLFIINITIVVDHLI.

The next 9 helical transmembrane spans lie at 18-38 (VTSL…EQSP), 40-60 (GFLI…SFIF), 87-107 (VVQA…VLAV), 111-131 (LLTA…YTIF), 139-159 (NIVI…AAIG), 168-188 (SLFM…AIFL), 212-232 (SIFF…FLES), 234-254 (MGFL…ILSY), and 269-289 (FFFS…DHLI).

It belongs to the UbiA prenyltransferase family. Protoheme IX farnesyltransferase subfamily.

Its subcellular location is the cell inner membrane. It catalyses the reaction heme b + (2E,6E)-farnesyl diphosphate + H2O = Fe(II)-heme o + diphosphate. Its pathway is porphyrin-containing compound metabolism; heme O biosynthesis; heme O from protoheme: step 1/1. Converts heme B (protoheme IX) to heme O by substitution of the vinyl group on carbon 2 of heme B porphyrin ring with a hydroxyethyl farnesyl side group. The sequence is that of Protoheme IX farnesyltransferase from Leptospira interrogans serogroup Icterohaemorrhagiae serovar copenhageni (strain Fiocruz L1-130).